The chain runs to 332 residues: Arabinogalactan endo-beta-1,4-galactanase (332 aa).

A glycan (N-linked (GlcNAc...) asparagine) is linked at N111. E135 acts as the Proton donor in catalysis. E245 functions as the Nucleophile in the catalytic mechanism.

It belongs to the glycosyl hydrolase 53 family.

It catalyses the reaction The enzyme specifically hydrolyzes (1-&gt;4)-beta-D-galactosidic linkages in type I arabinogalactans.. The polypeptide is Arabinogalactan endo-beta-1,4-galactanase (Thermothelomyces thermophilus (Myceliophthora thermophila)).